The primary structure comprises 153 residues: UPF0756 membrane protein BCQ_4399 (153 aa).

Transmembrane regions (helical) follow at residues 8-28 (FLFILLIIGLIAKNQSLTVAI), 54-74 (LGVTVITIAVLVPIATGEIGF), 87-107 (WIALASGVAVALLAKGGVQLL), and 117-137 (LVFGTIIAVALFNGVAVGPLI).

The protein belongs to the UPF0756 family.

Its subcellular location is the cell membrane. This chain is UPF0756 membrane protein BCQ_4399, found in Bacillus cereus (strain Q1).